Here is a 45-residue protein sequence, read N- to C-terminus: Large ribosomal subunit protein bL36 (45 aa).

The tract at residues Val-26–Lys-45 is disordered. A compositionally biased stretch (basic residues) spans Lys-35–Lys-45.

The protein belongs to the bacterial ribosomal protein bL36 family.

In Protochlamydia amoebophila (strain UWE25), this protein is Large ribosomal subunit protein bL36.